We begin with the raw amino-acid sequence, 259 residues long: Protein unc-50 homolog (259 aa).

N-acetylmethionine is present on M1. The Cytoplasmic segment spans residues 1–82; it reads MLPSTSLSSS…TKDQWARDDP (82 aa). Position 6 is a phosphoserine (S6). A helical membrane pass occupies residues 83–103; sequence AFLVLLSIWLCVSTIGFGFVL. Topologically, residues 104–112 are lumenal; the sequence is DMGFFETIK. The chain crosses the membrane as a helical span at residues 113 to 133; the sequence is LLLWVVFIDCVGVGLLISTLM. Residues 134–163 are Cytoplasmic-facing; sequence WFVSNKYLVKRQSRDYDVEWGYAFDVHLNA. A helical transmembrane segment spans residues 164–184; sequence FYPLLVILHFIQLFFINHVIL. At 185–187 the chain is on the lumenal side; that stretch reads TDT. A helical membrane pass occupies residues 188 to 208; sequence FIGYLVGNTLWLIAVGYYIYV. At 209 to 222 the chain is on the cytoplasmic side; the sequence is TFLGYSALPFLKNT. The chain crosses the membrane as a helical span at residues 223-243; sequence VILLYPFAPLMVLYGLSLALG. The Lumenal segment spans residues 244–259; the sequence is WNFTHTLCSFYKYRVK.

The protein belongs to the unc-50 family. As to expression, highly expressed in periodontal ligament and bone marrow, but not in gingival fibroblasts.

The protein resides in the nucleus inner membrane. Its subcellular location is the golgi apparatus membrane. In terms of biological role, involved in the cell surface expression of neuronal nicotinic receptors. Binds RNA. The sequence is that of Protein unc-50 homolog (Unc50) from Mus musculus (Mouse).